The primary structure comprises 114 residues: MIEVALGAGLGASVRYLITQVLKSKTRVFPWATFIINITGALLLGFLHSKITSSHILLLLGTGFLGGYTTFSTFQVELVTLVNNRKQKMMIIYLLLTVICGILAAYCGSWLGKL.

The next 3 membrane-spanning stretches (helical) occupy residues 28 to 48, 56 to 76, and 91 to 111; these read VFPW…GFLH, ILLL…TFQV, and IIYL…GSWL. 2 residues coordinate Na(+): glycine 66 and threonine 69.

Belongs to the fluoride channel Fluc/FEX (TC 1.A.43) family.

It is found in the cell membrane. The enzyme catalyses fluoride(in) = fluoride(out). Na(+) is not transported, but it plays an essential structural role and its presence is essential for fluoride channel function. In terms of biological role, fluoride-specific ion channel. Important for reducing fluoride concentration in the cell, thus reducing its toxicity. In Ligilactobacillus salivarius (strain UCC118) (Lactobacillus salivarius), this protein is Fluoride-specific ion channel FluC 1.